The chain runs to 298 residues: ATP phosphoribosyltransferase (298 aa).

It belongs to the ATP phosphoribosyltransferase family. Long subfamily. Requires Mg(2+) as cofactor.

Its subcellular location is the cytoplasm. It catalyses the reaction 1-(5-phospho-beta-D-ribosyl)-ATP + diphosphate = 5-phospho-alpha-D-ribose 1-diphosphate + ATP. Its pathway is amino-acid biosynthesis; L-histidine biosynthesis; L-histidine from 5-phospho-alpha-D-ribose 1-diphosphate: step 1/9. Feedback inhibited by histidine. In terms of biological role, catalyzes the condensation of ATP and 5-phosphoribose 1-diphosphate to form N'-(5'-phosphoribosyl)-ATP (PR-ATP). Has a crucial role in the pathway because the rate of histidine biosynthesis seems to be controlled primarily by regulation of HisG enzymatic activity. This is ATP phosphoribosyltransferase from Psychromonas ingrahamii (strain DSM 17664 / CCUG 51855 / 37).